A 428-amino-acid chain; its full sequence is MLDIQFIREHTDIVKESQRKRGESVELVDEVLSSDTARREALKAFEEARAQQKEIGKKVASAPADEKAKLIAETKELSQKVSEYKSKADSAAEEYTTAMWKLSNIVEPEAPEGGEDDYVVVKKVGQIRDFAAEGFEPKDHLTLGTGVAGIDMRRGVKVGGSRFYFLRGQVARMQIAMLTMAVDQAEEHGFTLAITPTLVRPEVMRGTGFLNSHADEIYRLREPDDQYLVGTSEVALAGMHENEILDLGNGPLRYCGWSSCYRREAGAAGKDTSGIIRVHQFDKVEMFVYAKQEDSYKEHEHLLAMEQEMLAKVEVPYRIIDTAAGDLGSSAARKFDCEAWVPTQGRYRELTSTSNCTEYQARRLNIRERMEDGGTRPVSTLNGTLATTRWLVAIMENHQQKDGSIEIPKAMRAYMGGKEVIEPTKWEA.

231-233 (TSE) serves as a coordination point for L-serine. ATP contacts are provided by residues 262-264 (RRE) and valine 278. Position 285 (glutamate 285) interacts with L-serine. Position 349–352 (349–352 (ELTS)) interacts with ATP. Threonine 384 contributes to the L-serine binding site.

Belongs to the class-II aminoacyl-tRNA synthetase family. Type-1 seryl-tRNA synthetase subfamily. In terms of assembly, homodimer. The tRNA molecule binds across the dimer.

Its subcellular location is the cytoplasm. The enzyme catalyses tRNA(Ser) + L-serine + ATP = L-seryl-tRNA(Ser) + AMP + diphosphate + H(+). It carries out the reaction tRNA(Sec) + L-serine + ATP = L-seryl-tRNA(Sec) + AMP + diphosphate + H(+). The protein operates within aminoacyl-tRNA biosynthesis; selenocysteinyl-tRNA(Sec) biosynthesis; L-seryl-tRNA(Sec) from L-serine and tRNA(Sec): step 1/1. Functionally, catalyzes the attachment of serine to tRNA(Ser). Is also able to aminoacylate tRNA(Sec) with serine, to form the misacylated tRNA L-seryl-tRNA(Sec), which will be further converted into selenocysteinyl-tRNA(Sec). The chain is Serine--tRNA ligase from Bifidobacterium longum (strain NCC 2705).